We begin with the raw amino-acid sequence, 74 residues long: Guanine nucleotide-binding protein G(T) subunit gamma-T1 (74 aa).

At C71 the chain carries Cysteine methyl ester. C71 is lipidated: S-farnesyl cysteine. A propeptide spans 72 to 74 (VIS) (removed in mature form).

The protein belongs to the G protein gamma family. G proteins are composed of 3 units, alpha, beta and gamma. As to expression, retinal rod outer segment.

It is found in the cell membrane. Functionally, guanine nucleotide-binding proteins (G proteins) are involved as a modulator or transducer in various transmembrane signaling systems. The beta and gamma chains are required for the GTPase activity, for replacement of GDP by GTP, and for G protein-effector interaction. The sequence is that of Guanine nucleotide-binding protein G(T) subunit gamma-T1 (GNGT1) from Bos taurus (Bovine).